A 156-amino-acid polypeptide reads, in one-letter code: 6,7-dimethyl-8-ribityllumazine synthase (156 aa).

5-amino-6-(D-ribitylamino)uracil is bound by residues Phe22, Ala57–Glu59, and Thr81–Ile83. Residue Gly86–Thr87 participates in (2S)-2-hydroxy-3-oxobutyl phosphate binding. His89 functions as the Proton donor in the catalytic mechanism. Phe114 is a binding site for 5-amino-6-(D-ribitylamino)uracil. Position 128 (Arg128) interacts with (2S)-2-hydroxy-3-oxobutyl phosphate.

This sequence belongs to the DMRL synthase family. As to quaternary structure, forms an icosahedral capsid composed of 60 subunits, arranged as a dodecamer of pentamers.

It carries out the reaction (2S)-2-hydroxy-3-oxobutyl phosphate + 5-amino-6-(D-ribitylamino)uracil = 6,7-dimethyl-8-(1-D-ribityl)lumazine + phosphate + 2 H2O + H(+). It functions in the pathway cofactor biosynthesis; riboflavin biosynthesis; riboflavin from 2-hydroxy-3-oxobutyl phosphate and 5-amino-6-(D-ribitylamino)uracil: step 1/2. Catalyzes the formation of 6,7-dimethyl-8-ribityllumazine by condensation of 5-amino-6-(D-ribitylamino)uracil with 3,4-dihydroxy-2-butanone 4-phosphate. This is the penultimate step in the biosynthesis of riboflavin. This Mannheimia succiniciproducens (strain KCTC 0769BP / MBEL55E) protein is 6,7-dimethyl-8-ribityllumazine synthase.